The following is a 54-amino-acid chain: Potassium channel toxin alpha-KTx 14.2 (54 aa).

An N-terminal signal peptide occupies residues 1-23 (MKIFFAILLILAVCSMAIWTVNG). 3 disulfides stabilise this stretch: Cys-30–Cys-46, Cys-36–Cys-51, and Cys-40–Cys-53.

It belongs to the short scorpion toxin superfamily. Potassium channel inhibitor family. Alpha-KTx 14 subfamily. Expressed by the venom gland.

It localises to the secreted. In terms of biological role, inhibits potassium channels. May be active towards small conductance calcium-activated potassium channels (KCNN, SK), and less active towards voltage-gated potassium channels (Kv/KCN). In Olivierus martensii (Manchurian scorpion), this protein is Potassium channel toxin alpha-KTx 14.2.